The sequence spans 421 residues: Acetylglutamate kinase (421 aa).

The acetylglutamate kinase stretch occupies residues 1–252 (MASTKEISQY…PLESSVSITR (252 aa)). Substrate contacts are provided by residues 59 to 60 (AG), Arg81, and Asn170. An N-acetyltransferase domain is found at 274–420 (ERVIRATTWK…HCAQHPPTLI (147 aa)).

This sequence in the N-terminal section; belongs to the acetylglutamate kinase family. ArgB subfamily.

Its subcellular location is the cytoplasm. It carries out the reaction N-acetyl-L-glutamate + ATP = N-acetyl-L-glutamyl 5-phosphate + ADP. It functions in the pathway amino-acid biosynthesis; L-arginine biosynthesis; N(2)-acetyl-L-ornithine from L-glutamate: step 2/4. The chain is Acetylglutamate kinase (argB) from Xylella fastidiosa (strain 9a5c).